The sequence spans 308 residues: Porphobilinogen deaminase (308 aa).

C241 carries the post-translational modification S-(dipyrrolylmethanemethyl)cysteine.

It belongs to the HMBS family. Monomer. Dipyrromethane is required as a cofactor.

It carries out the reaction 4 porphobilinogen + H2O = hydroxymethylbilane + 4 NH4(+). Its pathway is porphyrin-containing compound metabolism; protoporphyrin-IX biosynthesis; coproporphyrinogen-III from 5-aminolevulinate: step 2/4. Functionally, tetrapolymerization of the monopyrrole PBG into the hydroxymethylbilane pre-uroporphyrinogen in several discrete steps. The chain is Porphobilinogen deaminase from Staphylococcus aureus (strain MRSA252).